Reading from the N-terminus, the 142-residue chain is Large ribosomal subunit protein uL11 (142 aa).

Belongs to the universal ribosomal protein uL11 family. As to quaternary structure, part of the ribosomal stalk of the 50S ribosomal subunit. Interacts with L10 and the large rRNA to form the base of the stalk. L10 forms an elongated spine to which L12 dimers bind in a sequential fashion forming a multimeric L10(L12)X complex. Post-translationally, one or more lysine residues are methylated.

Forms part of the ribosomal stalk which helps the ribosome interact with GTP-bound translation factors. In Aliivibrio fischeri (strain MJ11) (Vibrio fischeri), this protein is Large ribosomal subunit protein uL11.